The chain runs to 556 residues: MSVSAFNRRWAAVILEALTRHGVRHVCIAPGSRSTPLTLAAAENPAFIHHTHFDERGLGHLALGLAKVSQQPVAVIVTSGTAVANLYPALIEAGLTGEKLILLTADRPPELIDCGANQAIRQAGMFASHPSQTLSLPRPTQDIPARWLVSTIDNALAMLHAGALHINCPFAEPLYGDMNDTGLVWQQRLGDWWQDEKPWLREARRLASDKQRDWFFWRQKRGVVVAGRMSAEEGKKVAQWAQTLGWPLIGDVLSQTGQPLPCADLWLGNAKAVTELQQAQIVVQLGSSLTGKRLLQWQATCEPEEYWVIDNIEGRLDPAHHRGRRLVAKIADWLELHPAEKRKPWCVGIPRLAELAWQRVVAQRDTFGEAQLAHRIRDYLPEQGQLFVGNSLVVRLIDALSQLPAGYPVYSNRGASGIDGLLSTAAGVQRASAKSTLAIVGDLSALYDLNALALLRQVSAPFVLIVVNNNGGQIFSLLPTPQSKRERFYLMPQNVHFDHAAAMFNLRYHRPENWEELESALAGAWRTPATTVIELVVNDTDGAQTLQQLLAQVSHL.

Belongs to the TPP enzyme family. MenD subfamily. In terms of assembly, homodimer. Requires Mg(2+) as cofactor. Mn(2+) serves as cofactor. Thiamine diphosphate is required as a cofactor.

The enzyme catalyses isochorismate + 2-oxoglutarate + H(+) = 5-enolpyruvoyl-6-hydroxy-2-succinyl-cyclohex-3-ene-1-carboxylate + CO2. It participates in quinol/quinone metabolism; 1,4-dihydroxy-2-naphthoate biosynthesis; 1,4-dihydroxy-2-naphthoate from chorismate: step 2/7. The protein operates within quinol/quinone metabolism; menaquinone biosynthesis. In terms of biological role, catalyzes the thiamine diphosphate-dependent decarboxylation of 2-oxoglutarate and the subsequent addition of the resulting succinic semialdehyde-thiamine pyrophosphate anion to isochorismate to yield 2-succinyl-5-enolpyruvyl-6-hydroxy-3-cyclohexene-1-carboxylate (SEPHCHC). This chain is 2-succinyl-5-enolpyruvyl-6-hydroxy-3-cyclohexene-1-carboxylate synthase, found in Salmonella paratyphi A (strain AKU_12601).